The chain runs to 340 residues: N-acetyl-gamma-glutamyl-phosphate reductase (340 aa).

The active site involves C146.

This sequence belongs to the NAGSA dehydrogenase family. Type 1 subfamily.

It is found in the cytoplasm. It catalyses the reaction N-acetyl-L-glutamate 5-semialdehyde + phosphate + NADP(+) = N-acetyl-L-glutamyl 5-phosphate + NADPH + H(+). It participates in amino-acid biosynthesis; L-arginine biosynthesis; N(2)-acetyl-L-ornithine from L-glutamate: step 3/4. Catalyzes the NADPH-dependent reduction of N-acetyl-5-glutamyl phosphate to yield N-acetyl-L-glutamate 5-semialdehyde. The sequence is that of N-acetyl-gamma-glutamyl-phosphate reductase from Streptococcus thermophilus (strain ATCC BAA-491 / LMD-9).